The chain runs to 194 residues: Ribonuclease HII (194 aa).

Positions 3-193 constitute an RNase H type-2 domain; it reads ILTAGVDEAG…VRNLLAQQAL (191 aa). Positions 9, 10, and 101 each coordinate a divalent metal cation.

It belongs to the RNase HII family. Requires Mn(2+) as cofactor. The cofactor is Mg(2+).

Its subcellular location is the cytoplasm. The catalysed reaction is Endonucleolytic cleavage to 5'-phosphomonoester.. Functionally, endonuclease that specifically degrades the RNA of RNA-DNA hybrids. In Neisseria meningitidis serogroup A / serotype 4A (strain DSM 15465 / Z2491), this protein is Ribonuclease HII (rnhB).